A 142-amino-acid chain; its full sequence is Protein E6 (142 aa).

Zinc fingers lie at residues 31-67 and 104-140; these read CIWC…CAFC and CAIC…CTQC.

This sequence belongs to the papillomaviridae E6 protein family. In terms of assembly, forms homodimers. Interacts with ubiquitin-protein ligase UBE3A/E6-AP; this interaction stimulates UBE3A ubiquitin activity. Interacts with host TP53 and EP300; this interaction inhibits TP53 activity.

The protein localises to the host cytoplasm. It localises to the host nucleus. In terms of biological role, plays a major role in the induction and maintenance of cellular transformation. E6 associates with host UBE3A/E6-AP ubiquitin-protein ligase and modulates its activity. Sequesters tumor suppressor TP53 in the host cytoplasm and modulates its activity by interacting with host EP300 that results in the reduction of TP53 acetylation and activation. In turn, apoptosis induced by DNA damage is inhibited. E6 also protects host keratinocytes from apoptosis by mediating the degradation of host BAK1. May also inhibit host immune response. In Homo sapiens (Human), this protein is Protein E6.